The following is a 311-amino-acid chain: Aspartate carbamoyltransferase catalytic subunit (311 aa).

Carbamoyl phosphate-binding residues include R55 and T56. K85 lines the L-aspartate pocket. Positions 106, 135, and 138 each coordinate carbamoyl phosphate. Residues R168 and R230 each contribute to the L-aspartate site. Carbamoyl phosphate is bound by residues L268 and P269.

The protein belongs to the aspartate/ornithine carbamoyltransferase superfamily. ATCase family. Heterododecamer (2C3:3R2) of six catalytic PyrB chains organized as two trimers (C3), and six regulatory PyrI chains organized as three dimers (R2).

The catalysed reaction is carbamoyl phosphate + L-aspartate = N-carbamoyl-L-aspartate + phosphate + H(+). The protein operates within pyrimidine metabolism; UMP biosynthesis via de novo pathway; (S)-dihydroorotate from bicarbonate: step 2/3. In terms of biological role, catalyzes the condensation of carbamoyl phosphate and aspartate to form carbamoyl aspartate and inorganic phosphate, the committed step in the de novo pyrimidine nucleotide biosynthesis pathway. The chain is Aspartate carbamoyltransferase catalytic subunit from Escherichia fergusonii (strain ATCC 35469 / DSM 13698 / CCUG 18766 / IAM 14443 / JCM 21226 / LMG 7866 / NBRC 102419 / NCTC 12128 / CDC 0568-73).